The sequence spans 354 residues: Guanine nucleotide-binding protein G(i) subunit alpha-3 (354 aa).

Gly2 is lipidated: N-myristoyl glycine. Cys3 carries the S-palmitoyl cysteine lipid modification. Positions 32–354 constitute a G-alpha domain; it reads KEVKLLLLGA…KNNLKECGLY (323 aa). Positions 35–48 are G1 motif; that stretch reads KLLLLGAGESGKST. The GTP site is built by Gly42, Glu43, Ser44, Gly45, Lys46, Ser47, Thr48, Asp150, Ser151, Leu175, Arg176, Thr177, Arg178, Val179, Lys180, Thr181, Val201, and Gly203. Glu43, Ser44, Gly45, Lys46, Ser47, and Thr48 together coordinate GDP. Ser47 serves as a coordination point for Mg(2+). GDP-binding residues include Ser151, Leu175, Arg176, Thr177, and Arg178. The segment at 173 to 181 is G2 motif; the sequence is DVLRTRVKT. Arg178 is subject to ADP-ribosylarginine; by cholera toxin. Position 181 (Thr181) interacts with Mg(2+). Residues 196–205 are G3 motif; sequence FKMFDVGGQR. Position 204 is a deamidated glutamine; by Photorhabdus PAU_02230 (Gln204). Residues 265 to 272 are G4 motif; sequence ILFLNKKD. The GTP site is built by Asn269, Lys270, Asp272, Leu273, Cys325, Ala326, and Thr327. Asn269, Lys270, and Asp272 together coordinate GDP. The segment at 324–329 is G5 motif; it reads TCATDT. Cys325 and Ala326 together coordinate GDP. Cys351 carries the ADP-ribosylcysteine; by pertussis toxin modification.

It belongs to the G-alpha family. G(i/o/t/z) subfamily. In terms of assembly, heterotrimeric G proteins are composed of 3 units; alpha, beta and gamma. The alpha subunit contains the guanine nucleotide binding site. GTP binding causes dissociation of the heterotrimer, liberating the individual subunits so that they can interact with downstream effector proteins. Forms a complex with CCDC88A/GIV and EGFR which leads to enhanced EGFR signaling and triggering of cell migration; ligand stimulation is required for recruitment of GNAI3 to the complex. Interacts (inactive GDP-bound form) with CCDC88A/GIV (via GBA motif); the interaction leads to activation of GNAI3. Interacts (inactive GDP-bound form) with CCDC88C/DAPLE (via GBA motif); the interaction leads to activation of GNAI3. Interacts (inactive GDP-bound form) with NUCB1 (via GBA motif) and NUCB2 (via GBA motif); the interaction leads to activation of GNAI3. Interacts (inactive GDP-bound form) with PLCD4 (via GBA motif); the interaction leads to activation of GNAI3. Interacts with INSR; the interaction is probably mediated by CCDC88A/GIV. Interacts with GPSM1. Interacts (GDP-bound form) with GPSM2 (via GoLoco domains). Does not interact with RGS2. Interacts with RGS8 and RGS10; this strongly enhances the intrinsic GTPase activity. Interacts with RGS16; this strongly enhances the intrinsic GTPase activity. Interacts with RGS12. Interacts (via active GTP- or inactive GDP-bound form) with RGS14. Interacts (via active GTP-bound form) with TRPC5 (via ANK repeats) in a homotetrameric ion channel; the interaction is direct and activates the channel activity. (Microbial infection) Deamidated at Gln-204 by Photorhabdus asymbiotica toxin PAU_02230, blocking GTP hydrolysis of heterotrimeric GNAQ or GNA11 and G-alphai (GNAI1, GNAI2 or GNAI3) proteins, thereby activating RhoA.

It localises to the cytoplasm. Its subcellular location is the cell membrane. It is found in the cytoskeleton. The protein localises to the microtubule organizing center. The protein resides in the centrosome. Functionally, heterotrimeric guanine nucleotide-binding proteins (G proteins) function as transducers downstream of G protein-coupled receptors (GPCRs) in numerous signaling cascades. The alpha chain contains the guanine nucleotide binding site and alternates between an active, GTP-bound state and an inactive, GDP-bound state. Signaling by an activated GPCR promotes GDP release and GTP binding. The alpha subunit has a low GTPase activity that converts bound GTP to GDP, thereby terminating the signal. Both GDP release and GTP hydrolysis are modulated by numerous regulatory proteins. Signaling is mediated via effector proteins, such as adenylate cyclase. Inhibits adenylate cyclase activity, leading to decreased intracellular cAMP levels. Stimulates the activity of receptor-regulated K(+) channels. The active GTP-bound form prevents the association of RGS14 with centrosomes and is required for the translocation of RGS14 from the cytoplasm to the plasma membrane. May play a role in cell division. The active GTP-bound form activates the calcium permeant TRPC5 ion channels. The polypeptide is Guanine nucleotide-binding protein G(i) subunit alpha-3 (GNAI3) (Homo sapiens (Human)).